Consider the following 233-residue polypeptide: Endo-1,4-beta-xylanase 1 (233 aa).

A signal peptide spans methionine 1–alanine 20. Asparagine 27 carries N-linked (GlcNAc...) asparagine glycosylation. Residues glutamine 40–glutamine 230 form the GH11 domain. Residue glutamate 126 is the Nucleophile of the active site. The active-site Proton donor is glutamate 217.

This sequence belongs to the glycosyl hydrolase 11 (cellulase G) family.

It is found in the secreted. It catalyses the reaction Endohydrolysis of (1-&gt;4)-beta-D-xylosidic linkages in xylans.. The protein operates within glycan degradation; xylan degradation. Endo-1,4-beta-xylanase involved in the hydrolysis of xylan, a major structural heterogeneous polysaccharide found in plant biomass representing the second most abundant polysaccharide in the biosphere, after cellulose. Accounts for approximately 70 percent of the endoxylanase activity in the culture filtrate. This Pyricularia grisea (Crabgrass-specific blast fungus) protein is Endo-1,4-beta-xylanase 1 (XYL1).